A 639-amino-acid polypeptide reads, in one-letter code: Chaperone protein DnaK (639 aa).

At Thr198 the chain carries Phosphothreonine; by autocatalysis. The disordered stretch occupies residues 602–639; the sequence is QAKSQAQGGDNADAGKQANATADDVVDAEFEEVKDDKK. A compositionally biased stretch (acidic residues) spans 625–639; sequence DVVDAEFEEVKDDKK.

The protein belongs to the heat shock protein 70 family.

Functionally, acts as a chaperone. This is Chaperone protein DnaK from Shewanella baltica (strain OS195).